Here is a 605-residue protein sequence, read N- to C-terminus: Mini-chromosome maintenance complex-binding protein (605 aa).

S147 and S150 each carry phosphoserine.

This sequence belongs to the MCMBP family. As to quaternary structure, interacts with the MCM complex.

The protein localises to the nucleus. In terms of biological role, associated component of the MCM complex that acts as a regulator of DNA replication. Binds to the MCM complex during late S phase and may act by promoting the disassembly of the MCM complex from chromatin. The chain is Mini-chromosome maintenance complex-binding protein from Drosophila melanogaster (Fruit fly).